The primary structure comprises 76 residues: Sec-independent protein translocase protein TatA (76 aa).

A helical membrane pass occupies residues 1–21 (MGSFSIWHWLIVLLIVVLVFG). A disordered region spans residues 44-76 (RDGSTAPADPAQQVTANKSADANTVDVEAKQKS). Residues 55 to 65 (QQVTANKSADA) are compositionally biased toward polar residues.

Belongs to the TatA/E family. As to quaternary structure, the Tat system comprises two distinct complexes: a TatABC complex, containing multiple copies of TatA, TatB and TatC subunits, and a separate TatA complex, containing only TatA subunits. Substrates initially bind to the TatABC complex, which probably triggers association of the separate TatA complex to form the active translocon.

Its subcellular location is the cell inner membrane. Its function is as follows. Part of the twin-arginine translocation (Tat) system that transports large folded proteins containing a characteristic twin-arginine motif in their signal peptide across membranes. TatA could form the protein-conducting channel of the Tat system. The chain is Sec-independent protein translocase protein TatA from Methylibium petroleiphilum (strain ATCC BAA-1232 / LMG 22953 / PM1).